A 233-amino-acid chain; its full sequence is MSVISMKQLLEAGVHFGHQTRRWNPKMAPYIFTERNGIYIIDLQKTVRKAEEAYNFIKEVSTEGKDILFVGTKKQAQDAIKDEAIRSSMHFVNNRWLGGMLTNFSTIKKRIRRLSEIERMQEDGTFEVLPKKEVIKLKGELEKLEKNLGGIKNLDCDNIGAMFVVDPRKEKNAISEAKILGIPVVAIVDTNCDPEEVDYVIPGNDDAIRAVKLITAKMADAIMEGRQGEELAE.

Belongs to the universal ribosomal protein uS2 family.

This Clostridium botulinum (strain Alaska E43 / Type E3) protein is Small ribosomal subunit protein uS2.